A 485-amino-acid polypeptide reads, in one-letter code: Malonate-semialdehyde dehydrogenase (485 aa).

Positions 155, 179, 182, 183, and 232 each coordinate NAD(+). Residue Cys-287 is the Nucleophile of the active site. Position 386 (Glu-386) interacts with NAD(+).

Belongs to the aldehyde dehydrogenase family. IolA subfamily. In terms of assembly, homotetramer.

It carries out the reaction 3-oxopropanoate + NAD(+) + CoA + H2O = hydrogencarbonate + acetyl-CoA + NADH + H(+). It catalyses the reaction 2-methyl-3-oxopropanoate + NAD(+) + CoA + H2O = propanoyl-CoA + hydrogencarbonate + NADH + H(+). The protein operates within polyol metabolism; myo-inositol degradation into acetyl-CoA; acetyl-CoA from myo-inositol: step 7/7. Its function is as follows. Catalyzes the oxidation of malonate semialdehyde (MSA) and methylmalonate semialdehyde (MMSA) into acetyl-CoA and propanoyl-CoA, respectively. Is involved in a myo-inositol catabolic pathway. Bicarbonate, and not CO2, is the end-product of the enzymatic reaction. This chain is Malonate-semialdehyde dehydrogenase, found in Halalkalibacterium halodurans (strain ATCC BAA-125 / DSM 18197 / FERM 7344 / JCM 9153 / C-125) (Bacillus halodurans).